A 720-amino-acid polypeptide reads, in one-letter code: Putative glutamine--fructose-6-phosphate aminotransferase [isomerizing] (720 aa).

The active-site Nucleophile; for GATase activity is C2. In terms of domain architecture, Glutamine amidotransferase type-2 spans 2–321 (CGIFGYCNFL…DNDIAHIYDG (320 aa)). A compositionally biased stretch (polar residues) spans 266 to 280 (STTSTFNHGSSTETP). A disordered region spans residues 266-285 (STTSTFNHGSSTETPAENGL). SIS domains follow at residues 393-532 (WLTE…DLVS) and 565-710 (CDKK…VDLP).

It carries out the reaction D-fructose 6-phosphate + L-glutamine = D-glucosamine 6-phosphate + L-glutamate. The protein operates within nucleotide-sugar biosynthesis; UDP-N-acetyl-alpha-D-glucosamine biosynthesis; alpha-D-glucosamine 6-phosphate from D-fructose 6-phosphate: step 1/1. Functionally, involved in amino sugar synthesis (formation of chitin, supplies the amino sugars of asparagine-linked oligosaccharides of glycoproteins). The protein is Putative glutamine--fructose-6-phosphate aminotransferase [isomerizing] of Saccharomyces cerevisiae (strain RM11-1a) (Baker's yeast).